The following is a 577-amino-acid chain: Sulfite reductase [NADPH] hemoprotein beta-component (577 aa).

[4Fe-4S] cluster contacts are provided by Cys441, Cys447, Cys486, and Cys490. Cys490 provides a ligand contact to siroheme.

The protein belongs to the nitrite and sulfite reductase 4Fe-4S domain family. In terms of assembly, alpha(8)-beta(8). The alpha component is a flavoprotein, the beta component is a hemoprotein. Requires siroheme as cofactor. The cofactor is [4Fe-4S] cluster.

It carries out the reaction hydrogen sulfide + 3 NADP(+) + 3 H2O = sulfite + 3 NADPH + 4 H(+). It participates in sulfur metabolism; hydrogen sulfide biosynthesis; hydrogen sulfide from sulfite (NADPH route): step 1/1. Functionally, component of the sulfite reductase complex that catalyzes the 6-electron reduction of sulfite to sulfide. This is one of several activities required for the biosynthesis of L-cysteine from sulfate. The polypeptide is Sulfite reductase [NADPH] hemoprotein beta-component (Pectobacterium atrosepticum (strain SCRI 1043 / ATCC BAA-672) (Erwinia carotovora subsp. atroseptica)).